The following is a 433-amino-acid chain: Pyrimidine-nucleoside phosphorylase (433 aa).

81–83 is a binding site for phosphate; it reads KHS. Residues Gly88 and Thr90 each coordinate K(+). Phosphate-binding positions include Thr92, 108–110, and Thr120; that span reads KMS. Substrate contacts are provided by Arg168 and Lys187. K(+) is bound by residues Leu243, Ala246, and Glu255.

The protein belongs to the thymidine/pyrimidine-nucleoside phosphorylase family. As to quaternary structure, homodimer. K(+) is required as a cofactor.

It carries out the reaction uridine + phosphate = alpha-D-ribose 1-phosphate + uracil. It catalyses the reaction thymidine + phosphate = 2-deoxy-alpha-D-ribose 1-phosphate + thymine. The catalysed reaction is 2'-deoxyuridine + phosphate = 2-deoxy-alpha-D-ribose 1-phosphate + uracil. Functionally, catalyzes phosphorolysis of the pyrimidine nucleosides uridine, thymidine and 2'-deoxyuridine with the formation of the corresponding pyrimidine base and ribose-1-phosphate. The protein is Pyrimidine-nucleoside phosphorylase (pdp) of Staphylococcus aureus (strain bovine RF122 / ET3-1).